The primary structure comprises 139 residues: Gonadotropin subunit beta-2 (139 aa).

The N-terminal stretch at 1 to 24 (MFPLVLSLFLGATSDIWPLAPAEA) is a signal peptide. Disulfide bonds link Cys-30-Cys-78, Cys-44-Cys-93, Cys-47-Cys-131, Cys-55-Cys-109, Cys-59-Cys-111, and Cys-114-Cys-121. The N-linked (GlcNAc...) asparagine glycan is linked to Asn-34.

The protein belongs to the glycoprotein hormones subunit beta family. As to quaternary structure, heterodimer of an alpha and a beta chain.

It localises to the secreted. In terms of biological role, involved in gametogenesis and steroidogenesis. This Morone saxatilis (Striped bass) protein is Gonadotropin subunit beta-2 (cgbb).